The sequence spans 4545 residues: Prolow-density lipoprotein receptor-related protein 1 (4545 aa).

The first 19 residues, 1-19 (MLTPPLLLLLPLLSALVSG), serve as a signal peptide directing secretion. At 20-4424 (ATMDAPKTCS…SQQQPGHMAS (4405 aa)) the chain is on the extracellular side. LDL-receptor class A domains are found at residues 26–67 (KTCS…ICPQ) and 71–111 (QRCP…HCRE). Intrachain disulfides connect Cys28–Cys41, Cys35–Cys54, Cys48–Cys65, Cys73–Cys86, Cys80–Cys99, and Cys93–Cys109. In terms of domain architecture, EGF-like 1 spans 112–150 (LRANCSRMGCQHHCVPTPSGPTCYCNSSFQLQADGKTCK). Asn115 carries N-linked (GlcNAc...) asparagine glycosylation. 6 disulfide bridges follow: Cys116/Cys125, Cys121/Cys134, Cys136/Cys149, Cys155/Cys165, Cys161/Cys174, and Cys176/Cys189. Asn137 carries N-linked (GlcNAc...) asparagine glycosylation. In terms of domain architecture, EGF-like 2; calcium-binding spans 151–190 (DFDECSVYGTCSQLCTNTDGSFTCGCVEGYLLQPDNRSCK). N-linked (GlcNAc...) asparagine glycans are attached at residues Asn186, Asn240, and Asn275. LDL-receptor class B repeat units follow at residues 293-335 (GNFY…DPAM), 336-379 (GKVF…DLVS), and 380-423 (RLVY…FENY). N-linked (GlcNAc...) asparagine glycosylation is present at Asn358. An N-linked (GlcNAc...) asparagine glycan is attached at Asn447. Positions 475-521 (RSHACENDQYGKPGGCSDICLLANSHKARTCRCRSGFSLGSDGKSCK) constitute an EGF-like 3 domain. Cystine bridges form between Cys479–Cys494, Cys490–Cys505, and Cys507–Cys520. 4 LDL-receptor class B repeats span residues 572 to 614 (GFIY…DWMG), 615 to 660 (DNLY…DPLN), 661 to 711 (GWMY…DIPA), and 712 to 755 (GRLY…HGNY). Asn730 is a glycosylation site (N-linked (GlcNAc...) asparagine). The EGF-like 4 domain occupies 804-844 (GTNKCRVNNGGCSSLCLATPGSRQCACAEDQVLDTDGVTCL). 33 disulfides stabilise this stretch: Cys808/Cys819, Cys815/Cys828, Cys830/Cys843, Cys855/Cys867, Cys862/Cys880, Cys874/Cys891, Cys896/Cys908, Cys903/Cys921, Cys915/Cys932, Cys937/Cys949, Cys944/Cys962, Cys956/Cys972, Cys977/Cys990, Cys985/Cys1003, Cys997/Cys1012, Cys1016/Cys1028, Cys1023/Cys1041, Cys1035/Cys1052, Cys1063/Cys1076, Cys1070/Cys1089, Cys1083/Cys1098, Cys1105/Cys1119, Cys1113/Cys1132, Cys1126/Cys1141, Cys1146/Cys1160, Cys1153/Cys1173, Cys1167/Cys1183, Cys1186/Cys1197, Cys1193/Cys1207, Cys1209/Cys1222, Cys1228/Cys1238, Cys1234/Cys1247, and Cys1249/Cys1262. LDL-receptor class A domains lie at 853–893 (PQCQ…LCHQ), 894–934 (HTCP…TCSA), 935–974 (RTCP…SCAY), 975–1014 (PTCF…GCSH), 1014–1054 (HSCS…NCTN), 1061–1100 (GGCH…SCEG), 1103–1143 (HVCD…NCEA), and 1144–1183 (LACR…GELC). Residues Trp872, Asp875, Asp877, Asp879, Asp885, and Glu886 each coordinate Ca(2+). N-linked (GlcNAc...) asparagine glycosylation is present at Asn929. Residues Trp1033, Asp1036, Asp1038, Asp1040, Asp1046, and Glu1047 each coordinate Ca(2+). Asn1051 is a glycosylation site (N-linked (GlcNAc...) asparagine). The Ca(2+) site is built by Trp1081, Asp1084, Asp1086, Asp1088, Asp1094, and Glu1095. Asn1155 and Asn1156 each carry an N-linked (GlcNAc...) asparagine glycan. EGF-like domains lie at 1184–1223 (DQCS…HTCQ) and 1224–1263 (IQSY…ESCR). Asn1196 and Asn1219 each carry an N-linked (GlcNAc...) asparagine glycan. 5 LDL-receptor class B repeats span residues 1310-1356 (SALY…DWIA), 1357-1399 (GNIY…DPRD), 1400-1446 (GILF…DYLE), 1447-1491 (KRIL…YGGE), and 1492-1532 (VYWT…YHPS). A glycan (N-linked (GlcNAc...) asparagine) is linked at Asn1512. One can recognise an EGF-like 7 domain in the interval 1537–1580 (APNPCEANGGRGPCSHLCLINYNRTVSCACPHLMKLHKDNTTCY). 3 cysteine pairs are disulfide-bonded: Cys1541–Cys1554, Cys1550–Cys1564, and Cys1566–Cys1579. N-linked (GlcNAc...) asparagine glycans are attached at residues Asn1559, Asn1576, Asn1617, and Asn1646. LDL-receptor class B repeat units follow at residues 1628 to 1670 (QRVY…DWVS), 1671 to 1714 (RNLF…HPLR), 1715 to 1754 (GKLY…DFPE), and 1755 to 1799 (SKLY…MGDK). N-linked (GlcNAc...) asparagine glycosylation is found at Asn1724, Asn1734, Asn1764, and Asn1826. One can recognise an EGF-like 8 domain in the interval 1847–1888 (GTNPCSVNNGDCSQLCLPTSETTRSCMCTAGYSLRSGQQACE). Cystine bridges form between Cys1851/Cys1862, Cys1858/Cys1872, and Cys1874/Cys1887. N-linked (GlcNAc...) asparagine glycosylation is present at Asn1934. LDL-receptor class B repeat units lie at residues 1935-1977 (DTIY…DWIA), 1978-2020 (GNIY…HPEK), 2021-2064 (GYLF…DYQG), and 2065-2108 (GKLY…FEDF). N-linked (GlcNAc...) asparagine glycosylation is present at Asn1996. Lys2010 carries the post-translational modification N6-acetyllysine. Asn2049 carries N-linked (GlcNAc...) asparagine glycosylation. N-linked (GlcNAc...) asparagine glycans are attached at residues Asn2118 and Asn2128. Positions 2156-2196 (GTNVCAVANGGCQQLCLYRGGGQRACACAHGMLAEDGASCR) constitute an EGF-like 9 domain. Intrachain disulfides connect Cys2160–Cys2171, Cys2167–Cys2181, and Cys2183–Cys2195. LDL-receptor class B repeat units follow at residues 2254 to 2295 (NRIF…HRGW), 2296 to 2344 (DTLY…DECQ), 2345 to 2389 (NLMF…DHRA), 2390 to 2432 (EKLY…YGEH), and 2433 to 2474 (IFWT…VAND). Asn2473 carries an N-linked (GlcNAc...) asparagine glycan. In terms of domain architecture, EGF-like 10 spans 2479 to 2519 (ELSPCRINNGGCQDLCLLTHQGHVNCSCRGGRILQEDFTCR). Disulfide bonds link Cys2483-Cys2494, Cys2490-Cys2504, and Cys2506-Cys2518. Asn2503 carries an N-linked (GlcNAc...) asparagine glycan. Asn2522 carries N-linked (GlcNAc...) asparagine glycosylation. 7 LDL-receptor class A domains span residues 2523-2564 (SSCR…YCNS), 2565-2603 (RRCK…PCNK), 2604-2642 (TACG…NCSA), 2643-2691 (TDCS…DCPG), 2695-2733 (PRCP…HCNK), 2733-2772 (KFCS…HCEG), and 2773-2815 (KTCG…GCLY). 6 disulfides stabilise this stretch: Cys2525-Cys2538, Cys2533-Cys2551, Cys2545-Cys2562, Cys2567-Cys2579, Cys2574-Cys2592, and Cys2586-Cys2601. N-linked (GlcNAc...) asparagine glycosylation occurs at Asn2602. Cystine bridges form between Cys2606–Cys2618, Cys2613–Cys2631, Cys2625–Cys2640, Cys2645–Cys2667, Cys2661–Cys2680, Cys2674–Cys2689, Cys2697–Cys2709, Cys2704–Cys2722, Cys2716–Cys2731, Cys2735–Cys2747, Cys2742–Cys2760, Cys2754–Cys2770, Cys2775–Cys2788, Cys2782–Cys2801, and Cys2795–Cys2813. N-linked (GlcNAc...) asparagine glycans are attached at residues Asn2621 and Asn2639. A glycan (N-linked (GlcNAc...) asparagine) is linked at Asn2816. LDL-receptor class A domains are found at residues 2817–2856 (STCD…ECEY), 2857–2900 (PTCG…HCTS), and 2903–2941 (HKCN…RGCH). Intrachain disulfides connect Cys2819/Cys2831, Cys2826/Cys2844, Cys2838/Cys2854, Cys2859/Cys2871, Cys2866/Cys2885, Cys2879/Cys2898, Cys2905/Cys2918, Cys2913/Cys2931, Cys2925/Cys2940, Cys2945/Cys2957, Cys2953/Cys2966, Cys2968/Cys2981, Cys2987/Cys2997, Cys2993/Cys3006, and Cys3008/Cys3022. An N-linked (GlcNAc...) asparagine glycan is attached at Asn2906. The 41-residue stretch at 2942 to 2982 (VNECLSRKLSGCSQDCEDLKIGFKCRCRPGFRLKDDGRTCA) folds into the EGF-like 11 domain. Positions 2983–3023 (DLDECSTTFPCSQLCINTHGSYKCLCVEGYAPRGGDPHSCK) constitute an EGF-like 12; calcium-binding domain. N-linked (GlcNAc...) asparagine glycosylation is found at Asn3049 and Asn3090. 5 LDL-receptor class B repeats span residues 3070-3114 (QMIY…DWVG), 3115-3157 (GNLY…DVQN), 3158-3201 (GYLY…DYVT), 3202-3244 (ERIY…FEDY), and 3245-3285 (VYWT…FHAL). A glycan (N-linked (GlcNAc...) asparagine) is linked at Asn3265. Residues 3291-3332 (PNHPCKVNNGGCSNLCLLSPGGGHKCACPTNFYLGGDGRTCV) enclose the EGF-like 13 domain. 3 disulfide bridges follow: Cys3295–Cys3306, Cys3302–Cys3316, and Cys3318–Cys3331. LDL-receptor class A domains are found at residues 3333-3372 (SNCT…DCPE), 3373-3411 (FKCR…NCDI), 3412-3451 (HVCL…DCPE), 3452-3492 (VTCA…NCTQ), 3493-3534 (MTCG…ECDE), 3535-3573 (RTCE…SCTP), 3574-3612 (RPCS…DCTP), 3612-3650 (PRCD…ACGT), 3653-3693 (RTCP…ECAR), 3694-3734 (FICP…DCEP), and 3740-3779 (PHCK…DCSI). An N-linked (GlcNAc...) asparagine glycan is attached at Asn3334. Cystine bridges form between Cys3335–Cys3347, Cys3342–Cys3360, Cys3354–Cys3370, Cys3375–Cys3387, Cys3382–Cys3400, Cys3394–Cys3409, Cys3414–Cys3427, Cys3421–Cys3440, Cys3434–Cys3449, Cys3454–Cys3467, Cys3461–Cys3480, Cys3474–Cys3490, Cys3495–Cys3508, Cys3502–Cys3521, Cys3515–Cys3532, Cys3537–Cys3549, Cys3544–Cys3562, Cys3556–Cys3571, Cys3576–Cys3588, Cys3583–Cys3601, Cys3595–Cys3610, Cys3614–Cys3626, Cys3621–Cys3639, Cys3633–Cys3648, Cys3655–Cys3667, Cys3662–Cys3680, Cys3674–Cys3691, Cys3696–Cys3710, Cys3704–Cys3723, Cys3717–Cys3732, Cys3742–Cys3755, Cys3750–Cys3768, Cys3762–Cys3777, Cys3786–Cys3799, Cys3793–Cys3808, Cys3810–Cys3823, Cys3829–Cys3839, Cys3835–Cys3848, and Cys3850–Cys3861. N-linked (GlcNAc...) asparagine glycosylation occurs at Asn3489. N-linked (GlcNAc...) asparagine glycosylation is present at Asn3663. EGF-like domains lie at 3782-3824 (KLTS…PGCQ) and 3825-3862 (DINE…NTCK). Residue Asn3789 is glycosylated (N-linked (GlcNAc...) asparagine). Asn3840 carries an N-linked (GlcNAc...) asparagine glycan. 4 LDL-receptor class B repeats span residues 3913–3955 (GRVY…HLNI), 3971–4013 (GNVY…DPLR), 4014–4057 (GTMY…DYHN), and 4058–4102 (ERLY…FEDY). Positions 3941 to 3944 (RHRR) match the Recognition site for proteolytical processing motif. Residue Asn3954 is glycosylated (N-linked (GlcNAc...) asparagine). Asn4076 and Asn4126 each carry an N-linked (GlcNAc...) asparagine glycan. 7 EGF-like domains span residues 4148–4184 (VTNP…GTCV), 4197–4233 (RPGT…DKCE), 4233–4269 (ELDQ…PKCT), 4269–4305 (TAQV…DRCQ), 4305–4341 (QYRQ…PRCE), 4341–4376 (EVNK…PSCL), and 4374–4410 (SCLT…PRCE). 17 cysteine pairs are disulfide-bonded: Cys4152/Cys4161, Cys4157/Cys4170, Cys4172/Cys4183, Cys4201/Cys4211, Cys4205/Cys4221, Cys4223/Cys4232, Cys4237/Cys4247, Cys4241/Cys4257, Cys4259/Cys4268, Cys4273/Cys4283, Cys4277/Cys4293, Cys4295/Cys4304, Cys4309/Cys4319, Cys4313/Cys4329, Cys4331/Cys4340, Cys4345/Cys4353, and Cys4348/Cys4364. N-linked (GlcNAc...) asparagine glycosylation occurs at Asn4180. Residues Asn4279 and Asn4280 are each glycosylated (N-linked (GlcNAc...) asparagine). An N-linked (GlcNAc...) asparagine glycan is attached at Asn4365. Cystine bridges form between Cys4366–Cys4375, Cys4378–Cys4388, Cys4382–Cys4398, and Cys4400–Cys4409. A helical transmembrane segment spans residues 4425 to 4445 (ILIPLLLLLLLLLVAGVVFWY). The Cytoplasmic segment spans residues 4446–4545 (KRRVRGAKGF…PEDEIGDPLA (100 aa)). The tract at residues 4446-4545 (KRRVRGAKGF…PEDEIGDPLA (100 aa)) is interaction with MAFB. A Phosphothreonine modification is found at Thr4461. Positions 4503–4508 (FTNPVY) match the NPXY motif motif. Tyr4508 carries the post-translational modification Phosphotyrosine. Residues Ser4518, Ser4521, and Ser4524 each carry the phosphoserine modification.

The protein belongs to the LDLR family. As to quaternary structure, heterodimer of an 85-kDa membrane-bound carboxyl subunit and a non-covalently attached 515-kDa N-terminal subunit. Intracellular domain interacts with MAFB. Found in a complex with PID1/PCLI1, LRP1 and CUBNI. Interacts with SNX17, PID1/PCLI1, PDGF and CUBN. The intracellular domain interacts with SHC1, GULP1 and DAB1. Can weakly interact (via NPXY motif) with DAB2 (via PID domain); the interaction is enhanced by tyrosine phosphorylation of the NPXY motif. Interacts with MDK; promotes neuronal survival. Interacts with LRPAP1; this interaction is followed by rapid internalization. Interacts with uPA/PLAU and PAI1/SERPINE1, either individually or in complex with each other, leading to rapid endocytosis; this interaction is abolished in the presence of LRPAP1/RAP. Also interacts with tPA/PLAT alone or in complex with SERPINE1. Interacts with the urokinase receptor PLAUR; this interaction leads to PLAUR internalization and is impaired in the presence of SORL1. Interacts with PDGFB. Interacts with TAU/MAPT, leading to endocytosis; this interaction is reduced in the presence of LRPAP1/RAP. Interacts with IGFBP3. Interacts with ADGRG6. Phosphorylated on serine and threonine residues. Post-translationally, phosphorylated on tyrosine residues upon stimulation with PDGF. Tyrosine phosphorylation promotes interaction with SHC1. In terms of processing, cleaved into a 85 kDa membrane-spanning subunit (LRP-85) and a 515 kDa large extracellular domain (LRP-515) that remains non-covalently associated. Gamma-secretase-dependent cleavage of LRP-85 releases the intracellular domain from the membrane.

Its subcellular location is the cell membrane. It is found in the membrane. The protein resides in the coated pit. It localises to the golgi outpost. The protein localises to the cytoplasm. Its subcellular location is the cytoskeleton. It is found in the microtubule organizing center. The protein resides in the nucleus. Its function is as follows. Endocytic receptor involved in endocytosis and in phagocytosis of apoptotic cells. Required for early embryonic development. Involved in cellular lipid homeostasis. Involved in the plasma clearance of chylomicron remnants and activated LRPAP1 (alpha 2-macroglobulin), as well as the local metabolism of complexes between plasminogen activators and their endogenous inhibitors. Acts as an alpha-2-macroglobulin receptor. Acts as a TAU/MAPT receptor and controls the endocytosis of TAU/MAPT as well as its subsequent spread. May modulate cellular events, such as APP metabolism, kinase-dependent intracellular signaling, neuronal calcium signaling as well as neurotransmission. Also acts as a receptor for IGFBP3 to mediate cell growth inhibition. Functionally, (Microbial infection) Functions as a receptor for Vibrio cholerae cholix toxin and for Pseudomonas aeruginosa exotoxin A. This chain is Prolow-density lipoprotein receptor-related protein 1, found in Mus musculus (Mouse).